A 197-amino-acid chain; its full sequence is Proteinase inhibitor type-2 (197 aa).

Positions 1-24 are cleaved as a signal peptide; the sequence is MAVHKVSFVAHLLVLGMFLLLVDA. A run of 3 repeats spans residues 24-80, 81-140, and 141-196. Disulfide bonds link C27–C115, C31–C111, C39–C121, C51–C88, C54–C72, C55–C84, C61–C97, and C114–C132.

The protein belongs to the protease inhibitor I20 (potato type II proteinase inhibitor) family.

The protein is Proteinase inhibitor type-2 of Nicotiana tabacum (Common tobacco).